An 89-amino-acid polypeptide reads, in one-letter code: Abortive infection protein (89 aa).

It is found in the cell membrane. Its function is as follows. ABI may interact with a target in the cell membrane, which could be the product of the host's cmrA gene, and cause disruption of the cellular membrane such that lysis of the infected cell and death of the infecting phage would result. This chain is Abortive infection protein (abi), found in Escherichia coli.